We begin with the raw amino-acid sequence, 413 residues long: Lamin tail domain-containing protein 1 (413 aa).

2 disordered regions span residues 1-25 (MMKEASEPLASVTSINKQDSKVQDG) and 102-128 (HKDSSLGKQSTSSMVPRRQPQSSSDVD). The span at 107 to 128 (LGKQSTSSMVPRRQPQSSSDVD) shows a compositional bias: polar residues. The LTD domain maps to 169 to 287 (EVGQFTSSSL…EAIAWYTPIH (119 aa)). The tract at residues 356 to 413 (LPNKSPWCRNPNTSPHPYSSLIDSHDSDISESSLDTQLKPQPTKPKPDPGTKKKKAKS) is disordered. A compositionally biased stretch (low complexity) spans 385 to 396 (SESSLDTQLKPQ).

Belongs to the intermediate filament family.

In Mus musculus (Mouse), this protein is Lamin tail domain-containing protein 1 (Lmntd1).